A 202-amino-acid polypeptide reads, in one-letter code: LexA repressor (202 aa).

Positions 28-48 (RAEIAQQLGFRSPNAAEEHLK) form a DNA-binding region, H-T-H motif. Catalysis depends on for autocatalytic cleavage activity residues Ser-119 and Lys-156.

This sequence belongs to the peptidase S24 family. Homodimer.

The catalysed reaction is Hydrolysis of Ala-|-Gly bond in repressor LexA.. Represses a number of genes involved in the response to DNA damage (SOS response), including recA and lexA. Binds to the 16 bp palindromic sequence 5'-CTGTATATATATACAG-3'. In the presence of single-stranded DNA, RecA interacts with LexA causing an autocatalytic cleavage which disrupts the DNA-binding part of LexA, leading to derepression of the SOS regulon and eventually DNA repair. This Pectobacterium carotovorum subsp. carotovorum (strain PC1) protein is LexA repressor.